The chain runs to 212 residues: ATP-dependent dethiobiotin synthetase BioD (212 aa).

Residue 13–18 (GIGKTV) coordinates ATP. Position 17 (threonine 17) interacts with Mg(2+). Residue lysine 33 is part of the active site. Residue serine 37 coordinates substrate. Glutamate 100 provides a ligand contact to Mg(2+). ATP-binding positions include 100-103 (EGAG) and 184-186 (PRL).

The protein belongs to the dethiobiotin synthetase family. Homodimer. Requires Mg(2+) as cofactor.

It localises to the cytoplasm. It catalyses the reaction (7R,8S)-7,8-diammoniononanoate + CO2 + ATP = (4R,5S)-dethiobiotin + ADP + phosphate + 3 H(+). The protein operates within cofactor biosynthesis; biotin biosynthesis; biotin from 7,8-diaminononanoate: step 1/2. Its function is as follows. Catalyzes a mechanistically unusual reaction, the ATP-dependent insertion of CO2 between the N7 and N8 nitrogen atoms of 7,8-diaminopelargonic acid (DAPA, also called 7,8-diammoniononanoate) to form a ureido ring. In Rhodopseudomonas palustris (strain ATCC BAA-98 / CGA009), this protein is ATP-dependent dethiobiotin synthetase BioD.